The sequence spans 135 residues: RxLR effector protein PITG_02860 (135 aa).

A signal peptide spans 1–18 (MRLAFLLLAVSHFICGNA). The short motif at 48 to 64 (RKLLRTDERLSEANEER) is the RxLR-dEER element. The tract at residues 126-135 (LKDPQAFRGP) is NRL1-binding domain.

Belongs to the RxLR effector family. As to quaternary structure, interacts with host ubiquitin E3 ligase NRL1.

The protein localises to the secreted. It localises to the host cytoplasm. It is found in the host nucleus. The protein resides in the host nucleoplasm. In terms of biological role, effector that promotes P.infestans virulence and suppresses pattern-triggered immunity (PTI). Interacts with the host ubiquitin E3 ligase NRL1 and enhances the association between NRL1 and SWAP70 to promote proteasome-mediated degradation of SWAP70, which results in the suppression of immunity. This chain is RxLR effector protein PITG_02860, found in Phytophthora infestans (strain T30-4) (Potato late blight agent).